A 231-amino-acid chain; its full sequence is Ion-translocating oxidoreductase complex subunit E (231 aa).

Helical transmembrane passes span 18–38 (ALVQ…ATNA), 39–59 (LGLG…ISTL), 63–83 (TPAE…VSAV), 86–106 (LINA…PLIV), 125–145 (ALSA…MFVL), and 182–202 (PFLL…MLAG).

It belongs to the NqrDE/RnfAE family. As to quaternary structure, the complex is composed of six subunits: RsxA, RsxB, RsxC, RsxD, RsxE and RsxG.

The protein resides in the cell inner membrane. In terms of biological role, part of a membrane-bound complex that couples electron transfer with translocation of ions across the membrane. Required to maintain the reduced state of SoxR. This chain is Ion-translocating oxidoreductase complex subunit E, found in Escherichia coli (strain ATCC 8739 / DSM 1576 / NBRC 3972 / NCIMB 8545 / WDCM 00012 / Crooks).